The following is a 349-amino-acid chain: MSTLLLNLDFGEPPPKKALEGNAKHRKFVKKRRLLERKGFLNKKKQPPSKVPKLHSEPSQKGETPRVDGTWKATPLPKKKTTAASSSGSEQSLDKKAAVPWLTPAPSQKAGSVVAKVDLLGEFQSALPKIKSHPTRPQKKGSQKNPPPKNGPQNSTHTHSENKYSGVSQKIPGKMVAIDCEMVGTGPKGHVSSLARCSIVNYDGDVLYDEYILPPCHIVDYRTRWSGIRKQHMVNATPFKIARNQILKILAGKIVVGHAIHNDFKALQYIHPKSLTRDTSHIPLLNRKADCPENATMSLKSLTKKLLNRDIQAGKSGHSSVEDAQATMELYKLVEVEWEQHLAQNPPKD.

Disordered stretches follow at residues 1–100 and 126–166; these read MSTL…AAVP and ALPK…KYSG. The segment covering 14 to 23 has biased composition (basic and acidic residues); it reads PPKKALEGNA. Positions 24–47 are enriched in basic residues; the sequence is KHRKFVKKRRLLERKGFLNKKKQP. Basic and acidic residues predominate over residues 54–66; sequence LHSEPSQKGETPR. The segment covering 70–87 has biased composition (low complexity); that stretch reads TWKATPLPKKKTTAASSS. Over residues 130-142 the composition is skewed to basic residues; the sequence is IKSHPTRPQKKGS. The Exonuclease domain maps to 175 to 331; that stretch reads MVAIDCEMVG…EDAQATMELY (157 aa).

Its subcellular location is the nucleus. The protein resides in the nucleolus. Functionally, 3'-&gt; 5'-exoribonuclease involved in ribosome biogenesis in the processing of the 12S pre-rRNA. Displays a strong specificity for a 3'-end containing a free hydroxyl group. In Bos taurus (Bovine), this protein is Interferon-stimulated 20 kDa exonuclease-like 2 (ISG20L2).